The following is a 218-amino-acid chain: Hypoxanthine-guanine phosphoribosyltransferase (218 aa).

GMP-binding positions include lysine 69, 134-142, lysine 166, 186-188, and aspartate 194; these read EDIIDTGKT and KFV. The active-site Proton acceptor is the aspartate 138. Aspartate 194 serves as a coordination point for Mg(2+).

The protein belongs to the purine/pyrimidine phosphoribosyltransferase family. Homotetramer. It depends on Mg(2+) as a cofactor.

The protein localises to the cytoplasm. The enzyme catalyses IMP + diphosphate = hypoxanthine + 5-phospho-alpha-D-ribose 1-diphosphate. It carries out the reaction GMP + diphosphate = guanine + 5-phospho-alpha-D-ribose 1-diphosphate. Its pathway is purine metabolism; IMP biosynthesis via salvage pathway; IMP from hypoxanthine: step 1/1. In terms of biological role, converts guanine to guanosine monophosphate, and hypoxanthine to inosine monophosphate. Transfers the 5-phosphoribosyl group from 5-phosphoribosylpyrophosphate onto the purine. Plays a central role in the generation of purine nucleotides through the purine salvage pathway. This is Hypoxanthine-guanine phosphoribosyltransferase (HPRT1) from Gallus gallus (Chicken).